A 188-amino-acid polypeptide reads, in one-letter code: PRA1 family protein F3 (188 aa).

The next 4 membrane-spanning stretches (helical) occupy residues 74-94 (IVVL…LIVF), 95-115 (TVLV…IKLF), 123-143 (TVLI…NATF), and 145-165 (IVGA…VRKT).

The protein belongs to the PRA1 family. Interacts with PRA1F2 and PRA1D. Interacts with ACD11 and BPA1. As to expression, expressed in lateral roots, lateral root caps and columella cells.

It localises to the endoplasmic reticulum membrane. The protein resides in the membrane. Its subcellular location is the cytoplasm. Its function is as follows. May be involved in both secretory and endocytic intracellular trafficking in the endosomal/prevacuolar compartments. This Arabidopsis thaliana (Mouse-ear cress) protein is PRA1 family protein F3.